We begin with the raw amino-acid sequence, 522 residues long: Glutathione reductase, mitochondrial (522 aa).

The transit peptide at 1-43 (MALLPRALSAGAGPSWRRAARAFRGFLLLLPEPAALTRALSRA) directs the protein to the mitochondrion. 2 residues coordinate FAD: S74 and G75. Residue S74 coordinates glutathione. Glutathione is bound at residue R81. E94 contacts FAD. K97 carries the N6-acetyllysine modification. FAD contacts are provided by T101, C102, and K110. A disulfide bridge connects residues C102 and C107. A glutathione-binding site is contributed by Y158. Position 174 (A174) interacts with FAD. 6 residues coordinate NADP(+): A239, I242, E245, R262, R268, and G334. Residue D375 coordinates FAD. L381 contributes to the NADP(+) binding site. T383 provides a ligand contact to FAD. A glutathione-binding site is contributed by R391. V414 lines the NADP(+) pocket. H511 lines the FAD pocket. The active-site Proton acceptor is H511.

This sequence belongs to the class-I pyridine nucleotide-disulfide oxidoreductase family. Homodimer; disulfide-linked. The cofactor is FAD.

The protein localises to the mitochondrion. Its subcellular location is the cytoplasm. It carries out the reaction 2 glutathione + NADP(+) = glutathione disulfide + NADPH + H(+). In terms of biological role, catalyzes the reduction of glutathione disulfide (GSSG) to reduced glutathione (GSH). Constitutes the major mechanism to maintain a high GSH:GSSG ratio in the cytosol. In Homo sapiens (Human), this protein is Glutathione reductase, mitochondrial (GSR).